The following is a 316-amino-acid chain: L-lactate dehydrogenase 3 (316 aa).

NAD(+) is bound by residues Val-16, Asp-37, Arg-42, and Tyr-68. Arg-91 contributes to the substrate binding site. Residues Ser-104, 121-123, and Thr-146 contribute to the NAD(+) site; that span reads ASN. Residue 123-126 participates in substrate binding; sequence NPVD. 151–154 is a binding site for substrate; that stretch reads DSSR. Residues Arg-156 and His-171 each contribute to the beta-D-fructose 1,6-bisphosphate site. His-178 functions as the Proton acceptor in the catalytic mechanism. Thr-233 lines the substrate pocket.

This sequence belongs to the LDH/MDH superfamily. LDH family. As to quaternary structure, homotetramer.

The protein localises to the cytoplasm. It catalyses the reaction (S)-lactate + NAD(+) = pyruvate + NADH + H(+). Its pathway is fermentation; pyruvate fermentation to lactate; (S)-lactate from pyruvate: step 1/1. Its activity is regulated as follows. Allosterically activated by fructose 1,6-bisphosphate (FBP). In terms of biological role, catalyzes the conversion of lactate to pyruvate. The chain is L-lactate dehydrogenase 3 from Bacillus cereus (strain ATCC 10987 / NRS 248).